Here is a 323-residue protein sequence, read N- to C-terminus: MDPKGQRVKLNDGHFIPVLGFGTFAPREVPKSEALEVTKFAIEAGFRHIDSAHLYQNEEQVGQAIRSKIADGTVKREDIFYTSKLWSTSLRPELVRPALEKSLNNLQLDYVDLYIIHFPVALKPGETLFPTDENGKPIFDSVDLCRTWEALEKCKDAGLTKSIGVSNFNHKQLEKILNKPGLKYKPVCNQVECHPYFNQSKLLDFCKSHDIVLVAYGALGSQRLKEWVNPNLPFLLEDPVLSAIAKKHRQTPALVALRYQIQRGVVVLAKSYNKKRIKENIQVFDFELTPEDMKAIDGLNSNMRYNELLLGVGHPEYPFVEEY.

Residues 20-24 and D50 each bind NADP(+); that span reads GFGTF. Catalysis depends on Y55, which acts as the Proton donor. H117 is a substrate binding site. Residues 166 to 167, Q190, 216 to 221, and 270 to 280 contribute to the NADP(+) site; these read SN, YGALGS, and KSYNKKRIKEN.

The protein belongs to the aldo/keto reductase family.

The protein localises to the cytoplasm. This chain is Dihydrodiol dehydrogenase 3, found in Bos taurus (Bovine).